The primary structure comprises 152 residues: Small ribosomal subunit protein uS19u (152 aa).

The protein belongs to the universal ribosomal protein uS19 family.

The protein resides in the cytoplasm. The chain is Small ribosomal subunit protein uS19u (RPS15A) from Arabidopsis thaliana (Mouse-ear cress).